The chain runs to 342 residues: Dihydroorotase (342 aa).

Positions 13 and 15 each coordinate Zn(2+). Residues histidine 15 to arginine 17 and asparagine 41 each bind substrate. Zn(2+) contacts are provided by lysine 97, histidine 134, and histidine 172. Residue lysine 97 is modified to N6-carboxylysine. A substrate-binding site is contributed by histidine 134. Substrate is bound at residue leucine 217. Aspartate 245 is a binding site for Zn(2+). Residue aspartate 245 is part of the active site. Substrate is bound by residues histidine 249 and alanine 261.

Belongs to the metallo-dependent hydrolases superfamily. DHOase family. Class II DHOase subfamily. Homodimer. The cofactor is Zn(2+).

It catalyses the reaction (S)-dihydroorotate + H2O = N-carbamoyl-L-aspartate + H(+). The protein operates within pyrimidine metabolism; UMP biosynthesis via de novo pathway; (S)-dihydroorotate from bicarbonate: step 3/3. Its function is as follows. Catalyzes the reversible cyclization of carbamoyl aspartate to dihydroorotate. The chain is Dihydroorotase from Shewanella loihica (strain ATCC BAA-1088 / PV-4).